Consider the following 189-residue polypeptide: Elongation factor P (189 aa).

The protein belongs to the elongation factor P family.

Its subcellular location is the cytoplasm. It functions in the pathway protein biosynthesis; polypeptide chain elongation. Functionally, involved in peptide bond synthesis. Stimulates efficient translation and peptide-bond synthesis on native or reconstituted 70S ribosomes in vitro. Probably functions indirectly by altering the affinity of the ribosome for aminoacyl-tRNA, thus increasing their reactivity as acceptors for peptidyl transferase. The chain is Elongation factor P from Pseudomonas syringae pv. tomato (strain ATCC BAA-871 / DC3000).